The sequence spans 78 residues: Large ribosomal subunit protein bL28 (78 aa).

Residues 1 to 23 (MSRVCQVTGKRPITGNNVSHSKR) form a disordered region.

The protein belongs to the bacterial ribosomal protein bL28 family.

This is Large ribosomal subunit protein bL28 from Marinomonas sp. (strain MWYL1).